We begin with the raw amino-acid sequence, 2167 residues long: SH3 and multiple ankyrin repeat domains protein 1 (2167 aa).

Residues 1 to 63 (MTHSPATSED…TRGLQGRSMS (63 aa)) are disordered. The segment covering 17–32 (SECPEGGSESDSSPDG) has biased composition (low complexity). A compositionally biased stretch (gly residues) spans 33-47 (PGRGPQGTRGRGSGA). An Omega-N-methylarginine modification is found at R43. Y186 is subject to Phosphotyrosine. 6 ANK repeats span residues 212–242 (SGET…HIDF), 246–275 (DGMT…SPNY), 279–309 (RGLT…QLGI), 313–342 (NGWQ…EPGA), 346–375 (SGNT…NKDV), and 379–407 (NGQT…EQDV). 2 disordered regions span residues 413 to 432 (SPKY…TVPP) and 454 to 546 (PGAS…SRGR). The span at 454–479 (PGASSSGTPGPTSGSQGQSQPSAPST) shows a compositional bias: low complexity. Residues 527–542 (PAGGTGGSGGPGGSLG) are compositionally biased toward gly residues. S540 is subject to Phosphoserine. Residue R544 is modified to Omega-N-methylarginine. In terms of domain architecture, SH3 spans 554–613 (VPGRSFMAVKSYQAQGEGEISLSKGEKIKVLSIGEGGFWEGQVKGRVGWFPSDCLEEVAN). In terms of domain architecture, PDZ spans 663-757 (TVLLQKKDSE…TLMVKVVMVT (95 aa)). Residues S671 and S791 each carry the phosphoserine modification. Positions 841–894 (ISASESPGPGGLASLGKHRPKGFFATESSFDPHHRSQPSYDRPSFLPPGPGLML) are disordered. S898 is subject to Phosphoserine. 2 disordered regions span residues 917–1233 (SRSL…LDFT) and 1245–1290 (RREG…RHSK). A compositionally biased stretch (pro residues) spans 928-947 (IPPPPTTSPPEPPYSTPPAP). R958 bears the Omega-N-methylarginine mark. Over residues 969–980 (PLPASSPSSFDG) the composition is skewed to low complexity. Basic residues predominate over residues 1004 to 1028 (AHHHPPHHHHHHAPPPQPHHHHAHP). R1059 is modified (omega-N-methylarginine). Residues 1064–1089 (SPTSGAPSPSHHSSSGGSSGPAQAPA) show a composition bias toward low complexity. Omega-N-methylarginine occurs at positions 1098 and 1109. Composition is skewed to low complexity over residues 1132 to 1146 (SLPP…ALPR) and 1171 to 1184 (STSS…GSST). Residues 1203–1224 (SPAPATSPVPPSPSPVPTPASP) show a composition bias toward pro residues. Residues 1245-1256 (RREGGWQNEARR) show a composition bias toward basic and acidic residues. Asymmetric dimethylarginine is present on R1257. S1291 carries the post-translational modification Phosphoserine. 8 disordered regions span residues 1308–1331 (GGSS…GSSS), 1361–1417 (LAAR…VLRL), 1429–1458 (RAGL…PPTA), 1500–1725 (FLEN…AGVA), 1740–1790 (GQAF…TPTS), 1828–1866 (VPPV…QPQA), 1898–1988 (PWAR…STRH), and 2002–2029 (RRAP…LPIL). Residues 1363-1372 (ARERALKESS) are compositionally biased toward basic and acidic residues. Pro residues predominate over residues 1378 to 1395 (PQPPPRPPSPRYDAPPPT). Residues 1396–1408 (LHHHSPHSPHSPH) show a composition bias toward basic residues. R1429 carries the omega-N-methylarginine modification. The residue at position 1442 (S1442) is a Phosphoserine. Residues 1530–1541 (RRVLPTSPTSPR) show a composition bias toward low complexity. The segment covering 1589 to 1615 (PLTPGPPHPLPDPPSPATPLPAAPPPA) has biased composition (pro residues). Positions 1624–1641 (DSTASSLTSYDSEVATLT) are enriched in polar residues. Pro residues predominate over residues 1648 to 1676 (PGDPPAPGPPAPAAPAPPAPQPGPDPPPG). The segment covering 1684–1694 (VDSRSSSDHPL) has biased composition (basic and acidic residues). A compositionally biased stretch (low complexity) spans 1695–1708 (ETISSASTLSSLSA). Positions 1709 to 1724 (EGGGNTGGVAGGGAGV) are enriched in gly residues. Residues 1850 to 1861 (PGPPPPPLPGPL) are compositionally biased toward pro residues. The residue at position 1901 (R1901) is an Omega-N-methylarginine. 3 stretches are compositionally biased toward low complexity: residues 1934–1945 (SQTSLLSKPSSS), 1960–1985 (TGSG…ASAS), and 2002–2012 (RRAPSPSLLPA). 3 positions are modified to omega-N-methylarginine: R2022, R2042, and R2080. The SAM domain occupies 2104–2167 (WTKFDVADWL…DRALKFFLER (64 aa)).

Belongs to the SHANK family. As to quaternary structure, may homomultimerize via its SAM domain. Interacts with the C-terminus of SSTR2 via the PDZ domain. Interacts with SHARPIN, SPTAN1, HOMER1 and DLGAP1/GKAP. Part of a complex with DLG4/PSD-95 and DLGAP1/GKAP. Interacts with BAIAP2. Interacts with IGSF9. Interacts with HOMER1 and HOMER3. In terms of tissue distribution, in brain, highly expressed in cortex, hippocampus and cerebellum.

Its subcellular location is the cytoplasm. It is found in the synapse. The protein resides in the postsynaptic density. In terms of biological role, seems to be an adapter protein in the postsynaptic density (PSD) of excitatory synapses that interconnects receptors of the postsynaptic membrane including NMDA-type and metabotropic glutamate receptors, and the actin-based cytoskeleton. Plays a role in the structural and functional organization of the dendritic spine and synaptic junction. Overexpression promotes maturation of dendritic spines and the enlargement of spine heads via its ability to recruit Homer to postsynaptic sites, and enhances presynaptic function. The chain is SH3 and multiple ankyrin repeat domains protein 1 (Shank1) from Mus musculus (Mouse).